A 444-amino-acid polypeptide reads, in one-letter code: MSGTKLEDSPPCRNWSSAPELNETQEPFLNPTDYDDEEFLRYLWREYLHPKEYEWVLIAGYIIVFVVALVGNVLVCVAVWKNHHMRTVTNYFIVNLSLADVLVTITCLPATLVVDITETWFFGQSLCKVIPYLQTVSVSVSVLTLSCIALDRWYAICHPLMFKSTAKRARNSIVIIWIVSCIIMIPQAIVMECSTMLPGLANKTTLFTVCDERWGGEIYPKMYHICFFLVTYMAPLCLMVLAYLQIFRKLWCRQIPGTSSVVQRKWKPLQPASQPRGPGQQTKSRISAVAAEIKQIRARRKTARMLMVVLLVFAICYLPISILNVLKRVFGMFTHTEDRETVYAWFTFSHWLVYANSAANPIIYNFLSGKFREEFKAAFSCCCLGVHHRQEDRLTRGRTSTESRKSLTTQISNFDNVSKLSEQVVLTSISTLPAANGAGPLQNW.

A compositionally biased stretch (basic and acidic residues) spans 1–10 (MSGTKLEDSP). Positions 1-30 (MSGTKLEDSPPCRNWSSAPELNETQEPFLN) are disordered. Residues 1–54 (MSGTKLEDSPPCRNWSSAPELNETQEPFLNPTDYDDEEFLRYLWREYLHPKEYE) lie on the Extracellular side of the membrane. N-linked (GlcNAc...) asparagine glycosylation is found at asparagine 14 and asparagine 22. Residues 14–27 (NWSSAPELNETQEP) are compositionally biased toward polar residues. The required for response to orexin-A stretch occupies residues 33 to 49 (DYDDEEFLRYLWREYLH). The chain crosses the membrane as a helical span at residues 55–75 (WVLIAGYIIVFVVALVGNVLV). At 76–88 (CVAVWKNHHMRTV) the chain is on the cytoplasmic side. Residues 89-110 (TNYFIVNLSLADVLVTITCLPA) form a helical membrane-spanning segment. The Extracellular segment spans residues 111–127 (TLVVDITETWFFGQSLC). Cysteine 127 and cysteine 210 are disulfide-bonded. A helical transmembrane segment spans residues 128–150 (KVIPYLQTVSVSVSVLTLSCIAL). At 151–170 (DRWYAICHPLMFKSTAKRAR) the chain is on the cytoplasmic side. A helical membrane pass occupies residues 171 to 191 (NSIVIIWIVSCIIMIPQAIVM). The Extracellular portion of the chain corresponds to 192 to 222 (ECSTMLPGLANKTTLFTVCDERWGGEIYPKM). N-linked (GlcNAc...) asparagine glycosylation occurs at asparagine 202. A helical membrane pass occupies residues 223–243 (YHICFFLVTYMAPLCLMVLAY). The Cytoplasmic segment spans residues 244-304 (LQIFRKLWCR…QIRARRKTAR (61 aa)). Residues 305-326 (MLMVVLLVFAICYLPISILNVL) form a helical membrane-spanning segment. The Extracellular portion of the chain corresponds to 327–342 (KRVFGMFTHTEDRETV). A helical transmembrane segment spans residues 343–366 (YAWFTFSHWLVYANSAANPIIYNF). Residues 367 to 444 (LSGKFREEFK…ANGAGPLQNW (78 aa)) are Cytoplasmic-facing.

Belongs to the G-protein coupled receptor 1 family.

It is found in the cell membrane. In terms of biological role, nonselective, high-affinity receptor for both orexin-A and orexin-B neuropeptides. Triggers an increase in cytoplasmic Ca(2+) levels in response to orexin-A binding. This chain is Orexin receptor type 2 (HCRTR2), found in Canis lupus familiaris (Dog).